The sequence spans 728 residues: Catalase-peroxidase (728 aa).

Residues 91–218 constitute a cross-link (tryptophyl-tyrosyl-methioninium (Trp-Tyr) (with M-244)); it reads WHSAGTYRIA…LAAVQMGLIY (128 aa). The active-site Proton acceptor is histidine 92. The tryptophyl-tyrosyl-methioninium (Tyr-Met) (with W-91) cross-link spans 218–244; sequence YVNPEGPDGNPDPVAAARDIRETFARM. Histidine 259 is a binding site for heme b.

The protein belongs to the peroxidase family. Peroxidase/catalase subfamily. As to quaternary structure, homodimer or homotetramer. It depends on heme b as a cofactor. In terms of processing, formation of the three residue Trp-Tyr-Met cross-link is important for the catalase, but not the peroxidase activity of the enzyme.

It catalyses the reaction H2O2 + AH2 = A + 2 H2O. The enzyme catalyses 2 H2O2 = O2 + 2 H2O. In terms of biological role, bifunctional enzyme with both catalase and broad-spectrum peroxidase activity. This chain is Catalase-peroxidase, found in Burkholderia multivorans (strain ATCC 17616 / 249).